The chain runs to 683 residues: MAALLLLPLLLLLPLLLLKLHLWPQLRWLPADLAFAVRALCCKRALRARALAAAAADPEGPEGGCSLAWRLAELAQQRAAHTFLIHGSRRFSYSEAERESNRAARAFLRALGWDWGPDGGDSGEGSAGEGERAAPGAGDAAAGSGAEFAGGDGAARGGGAAAPLSPGATVALLLPAGPEFLWLWFGLAKAGLRTAFVPTALRRGPLLHCLRSCGARALVLAPEFLESLEPDLPALRAMGLHLWAAGPGTHPAGISDLLAEVSAEVDGPVPGYLSSPQSITDTCLYIFTSGTTGLPKAARISHLKILQCQGFYQLCGVHQEDVIYLALPLYHMSGSLLGIVGCMGIGATVVLKSKFSAGQFWEDCQQHRVTVFQYIGELCRYLVNQPPSKAERGHKVRLAVGSGLRPDTWERFVRRFGPLQVLETYGLTEGNVATINYTGQRGAVGRASWLYKHIFPFSLIRYDVTTGEPIRDPQGHCMATSPGEPGLLVAPVSQQSPFLGYAGGPELAQGKLLKDVFRPGDVFFNTGDLLVCDDQGFLRFHDRTGDTFRWKGENVATTEVAEVFEALDFLQEVNVYGVTVPGHEGRAGMAALVLRPPHALDLMQLYTHVSENLPPYARPRFLRLQESLATTETFKQQKVRMANEGFDPSTLSDPLYVLDQAVGAYLPLTTARYSALLAGNLRI.

Residues 3–23 (ALLLLPLLLLLPLLLLKLHLW) form a helical membrane-spanning segment. A compositionally biased stretch (gly residues) spans 119 to 128 (GGDSGEGSAG). The disordered stretch occupies residues 119-145 (GGDSGEGSAGEGERAAPGAGDAAAGSG). Over residues 133–145 (AAPGAGDAAAGSG) the composition is skewed to low complexity. ATP is bound by residues 288–292 (TSGTT), H331, T428, D528, R543, and K635.

This sequence belongs to the ATP-dependent AMP-binding enzyme family. In terms of tissue distribution, expressed in bronchial and bronchiolar epithelial cells (at protein level).

Its subcellular location is the mitochondrion membrane. It catalyses the reaction a fatty acid(in) = a fatty acid(out). The catalysed reaction is a long-chain fatty acid + ATP + CoA = a long-chain fatty acyl-CoA + AMP + diphosphate. The enzyme catalyses hexadecanoate + ATP + CoA = hexadecanoyl-CoA + AMP + diphosphate. It carries out the reaction (9Z)-octadecenoate + ATP + CoA = (9Z)-octadecenoyl-CoA + AMP + diphosphate. It catalyses the reaction (9Z,12Z)-octadecadienoate + ATP + CoA = (9Z,12Z)-octadecadienoyl-CoA + AMP + diphosphate. The catalysed reaction is (5Z,8Z,11Z,14Z)-eicosatetraenoate + ATP + CoA = (5Z,8Z,11Z,14Z)-eicosatetraenoyl-CoA + AMP + diphosphate. The enzyme catalyses a very long-chain fatty acid + ATP + CoA = a very long-chain fatty acyl-CoA + AMP + diphosphate. It carries out the reaction tetracosanoate + ATP + CoA = tetracosanoyl-CoA + AMP + diphosphate. Mainly functions as an acyl-CoA ligase catalyzing the ATP-dependent formation of fatty acyl-CoA using LCFA and very-long-chain fatty acids (VLCFA) as substrates. Can mediate the levels of long-chain fatty acids (LCFA) in the cell by facilitating their transport across membranes. The sequence is that of Long-chain fatty acid transport protein 3 from Homo sapiens (Human).